The following is a 30-amino-acid chain: Photosystem I reaction center subunit XII (30 aa).

The helical transmembrane segment at 6–26 (VFTILAIALVPAVMALLLGSA) threads the bilayer.

This sequence belongs to the PsaM family.

Its subcellular location is the cellular thylakoid membrane. The chain is Photosystem I reaction center subunit XII from Synechococcus sp. (strain JA-2-3B'a(2-13)) (Cyanobacteria bacterium Yellowstone B-Prime).